The following is a 384-amino-acid chain: Tryptophan--tRNA ligase (384 aa).

Positions 81 to 89 match the 'HIGH' region motif; that stretch reads PSGPMHIGH. The 'KMSKS' region signature appears at 252–256; it reads KMSAS.

This sequence belongs to the class-I aminoacyl-tRNA synthetase family.

It localises to the cytoplasm. The enzyme catalyses tRNA(Trp) + L-tryptophan + ATP = L-tryptophyl-tRNA(Trp) + AMP + diphosphate + H(+). This chain is Tryptophan--tRNA ligase, found in Thermococcus onnurineus (strain NA1).